The chain runs to 955 residues: UPF0182 protein PMT_0755 (955 aa).

9 helical membrane passes run 25–45 (LLLS…WLWF), 58–78 (WLWQ…CQLW), 107–127 (LLGC…LAWL), 146–166 (IWAL…MLGN), 178–198 (CFCF…ALAI), 214–234 (FGLG…AQLI), 264–284 (CNFL…LLWL), 313–333 (SLAS…TWIQ), and 340–360 (LIAS…APFV).

It belongs to the UPF0182 family.

The protein resides in the cell membrane. This is UPF0182 protein PMT_0755 from Prochlorococcus marinus (strain MIT 9313).